We begin with the raw amino-acid sequence, 32 residues long: Photosystem II reaction center protein Z (32 aa).

The chain crosses the membrane as a helical span at residues Phe-12–Val-32.

It belongs to the PsbZ family. As to quaternary structure, PSII is composed of 1 copy each of membrane proteins PsbA, PsbB, PsbC, PsbD, PsbE, PsbF, PsbH, PsbI, PsbJ, PsbK, PsbL, PsbM, PsbT, PsbY, PsbZ, Psb30/Ycf12, at least 3 peripheral proteins of the oxygen-evolving complex and a large number of cofactors. It forms dimeric complexes.

The protein localises to the plastid. It is found in the chloroplast thylakoid membrane. Its function is as follows. May control the interaction of photosystem II (PSII) cores with the light-harvesting antenna, regulates electron flow through the 2 photosystem reaction centers. PSII is a light-driven water plastoquinone oxidoreductase, using light energy to abstract electrons from H(2)O, generating a proton gradient subsequently used for ATP formation. This is Photosystem II reaction center protein Z from Euglena granulata.